Consider the following 95-residue polypeptide: Aspartyl/glutamyl-tRNA(Asn/Gln) amidotransferase subunit C (95 aa).

It belongs to the GatC family. As to quaternary structure, heterotrimer of A, B and C subunits.

It carries out the reaction L-glutamyl-tRNA(Gln) + L-glutamine + ATP + H2O = L-glutaminyl-tRNA(Gln) + L-glutamate + ADP + phosphate + H(+). The catalysed reaction is L-aspartyl-tRNA(Asn) + L-glutamine + ATP + H2O = L-asparaginyl-tRNA(Asn) + L-glutamate + ADP + phosphate + 2 H(+). Its function is as follows. Allows the formation of correctly charged Asn-tRNA(Asn) or Gln-tRNA(Gln) through the transamidation of misacylated Asp-tRNA(Asn) or Glu-tRNA(Gln) in organisms which lack either or both of asparaginyl-tRNA or glutaminyl-tRNA synthetases. The reaction takes place in the presence of glutamine and ATP through an activated phospho-Asp-tRNA(Asn) or phospho-Glu-tRNA(Gln). This is Aspartyl/glutamyl-tRNA(Asn/Gln) amidotransferase subunit C from Bartonella bacilliformis (strain ATCC 35685 / KC583 / Herrer 020/F12,63).